The sequence spans 316 residues: Thymidylate synthase (316 aa).

DUMP is bound by residues Arg23 and Arg178 to Arg179. The Nucleophile role is filled by Cys198. DUMP-binding positions include Arg218 to Asp221, Asn229, and His259 to Tyr261. Asp221 is a binding site for (6R)-5,10-methylene-5,6,7,8-tetrahydrofolate. Ala315 provides a ligand contact to (6R)-5,10-methylene-5,6,7,8-tetrahydrofolate.

The protein belongs to the thymidylate synthase family. Bacterial-type ThyA subfamily. As to quaternary structure, homodimer.

It localises to the cytoplasm. It carries out the reaction dUMP + (6R)-5,10-methylene-5,6,7,8-tetrahydrofolate = 7,8-dihydrofolate + dTMP. The protein operates within pyrimidine metabolism; dTTP biosynthesis. Its function is as follows. Catalyzes the reductive methylation of 2'-deoxyuridine-5'-monophosphate (dUMP) to 2'-deoxythymidine-5'-monophosphate (dTMP) while utilizing 5,10-methylenetetrahydrofolate (mTHF) as the methyl donor and reductant in the reaction, yielding dihydrofolate (DHF) as a by-product. This enzymatic reaction provides an intracellular de novo source of dTMP, an essential precursor for DNA biosynthesis. The chain is Thymidylate synthase from Lacticaseibacillus paracasei (strain ATCC 334 / BCRC 17002 / CCUG 31169 / CIP 107868 / KCTC 3260 / NRRL B-441) (Lactobacillus paracasei).